A 162-amino-acid chain; its full sequence is Ribosome maturation factor RimP (162 aa).

The protein belongs to the RimP family.

The protein localises to the cytoplasm. Its function is as follows. Required for maturation of 30S ribosomal subunits. The polypeptide is Ribosome maturation factor RimP (Cupriavidus taiwanensis (strain DSM 17343 / BCRC 17206 / CCUG 44338 / CIP 107171 / LMG 19424 / R1) (Ralstonia taiwanensis (strain LMG 19424))).